A 386-amino-acid polypeptide reads, in one-letter code: Bifunctional enzyme IspD/IspF (386 aa).

Residues 1–226 (MATPSPLPSF…EDFMADLLPV (226 aa)) are 2-C-methyl-D-erythritol 4-phosphate cytidylyltransferase. The tract at residues 227-386 (RVGTGFDVHK…ATVVRKDTPA (160 aa)) is 2-C-methyl-D-erythritol 2,4-cyclodiphosphate synthase. A divalent metal cation is bound by residues aspartate 233 and histidine 235. 4-CDP-2-C-methyl-D-erythritol 2-phosphate-binding positions include 233–235 (DVH) and 259–260 (HS). Histidine 267 provides a ligand contact to a divalent metal cation. Residues 281–283 (DIG), 357–360 (TTTE), phenylalanine 364, and arginine 367 contribute to the 4-CDP-2-C-methyl-D-erythritol 2-phosphate site.

This sequence in the N-terminal section; belongs to the IspD/TarI cytidylyltransferase family. IspD subfamily. In the C-terminal section; belongs to the IspF family. The cofactor is a divalent metal cation.

It catalyses the reaction 2-C-methyl-D-erythritol 4-phosphate + CTP + H(+) = 4-CDP-2-C-methyl-D-erythritol + diphosphate. The catalysed reaction is 4-CDP-2-C-methyl-D-erythritol 2-phosphate = 2-C-methyl-D-erythritol 2,4-cyclic diphosphate + CMP. The protein operates within isoprenoid biosynthesis; isopentenyl diphosphate biosynthesis via DXP pathway; isopentenyl diphosphate from 1-deoxy-D-xylulose 5-phosphate: step 2/6. Its pathway is isoprenoid biosynthesis; isopentenyl diphosphate biosynthesis via DXP pathway; isopentenyl diphosphate from 1-deoxy-D-xylulose 5-phosphate: step 4/6. Its function is as follows. Bifunctional enzyme that catalyzes the formation of 4-diphosphocytidyl-2-C-methyl-D-erythritol from CTP and 2-C-methyl-D-erythritol 4-phosphate (MEP) (IspD), and catalyzes the conversion of 4-diphosphocytidyl-2-C-methyl-D-erythritol 2-phosphate (CDP-ME2P) to 2-C-methyl-D-erythritol 2,4-cyclodiphosphate (ME-CPP) with a corresponding release of cytidine 5-monophosphate (CMP) (IspF). This is Bifunctional enzyme IspD/IspF from Erythrobacter litoralis (strain HTCC2594).